A 276-amino-acid chain; its full sequence is Undecaprenyl-diphosphatase 1 (276 aa).

7 consecutive transmembrane segments (helical) span residues 4–24 (ILIC…FLPV), 46–63 (TFDV…CWEY), 83–103 (FTLN…LFEK), 108–128 (VLFS…IILW), 187–207 (VATE…TLYE), 217–237 (VDSL…AFVC), and 252–272 (VFAW…YSGW).

Belongs to the UppP family.

It localises to the cell inner membrane. The enzyme catalyses di-trans,octa-cis-undecaprenyl diphosphate + H2O = di-trans,octa-cis-undecaprenyl phosphate + phosphate + H(+). Catalyzes the dephosphorylation of undecaprenyl diphosphate (UPP). Confers resistance to bacitracin. The protein is Undecaprenyl-diphosphatase 1 of Burkholderia lata (strain ATCC 17760 / DSM 23089 / LMG 22485 / NCIMB 9086 / R18194 / 383).